Consider the following 215-residue polypeptide: Ras-related protein Rab-5A (215 aa).

Residues Ser-29, Ala-30, Gly-32, Lys-33, Ser-34, Ser-35, His-46, Glu-47, Thr-52, and Gly-78 each coordinate GTP. A Mg(2+)-binding site is contributed by Ser-34. 2 short sequence motifs (switch) span residues 44–56 and 77–93; these read QFHEFQESTIGAA and AGQERYHSLAPMYYRGA. Thr-52 lines the Mg(2+) pocket. A Phosphoserine modification is found at Ser-84. GTP contacts are provided by Asn-133, Lys-134, Asp-136, Ala-164, and Lys-165. Positions 185-215 are disordered; sequence EPQNPGINCTRGRGVDLTEPTQPTRSQCCSN. Over residues 203-215 the composition is skewed to polar residues; the sequence is EPTQPTRSQCCSN. S-geranylgeranyl cysteine attachment occurs at residues Cys-212 and Cys-213.

Belongs to the small GTPase superfamily. Rab family. As to quaternary structure, interacts with GDI1; this promotes dissociation from membranes; phosphorylation at Ser-84 disrupts this interaction. Interacts with GDI2; phosphorylation at Ser-84 disrupts the interaction. Interacts with SGSM1 and SGSM3. Interacts with PIK3CB. Interacts with RIN1 and GAPVD1, which regulate its pathway, probably by acting as a GEF. Interacts with RINL. Interacts with ALS2CL, SUN2, ZFYVE20 and RUFY1. Interacts with RABEP1; one RABEP1 homodimer binds two RAB5A chains, but at opposite sides of the dimer. Interacts with OCRL and INPP5F. May be a component of a complex composed of RAB5A, DYN2 and PIK3C3. Does not interact with the BLOC-3 complex (heterodimer of HPS1 and HPS4). Interacts with CLN5. Interacts with APPL2. Interacts with F8A1/F8A2/F8A3. Found in a complex with F8A1/F8A2/F8A3, HTT and RAB5A; mediates the recruitment of HTT by RAB5A onto early endosomes. Interacts with ATP9A. Interacts with PPP1R21; mediates the recruitment of FERRY complex by RAB5A onto early endosomes. Mg(2+) serves as cofactor. Post-translationally, phosphorylation of Ser-84 in the switch II region by LRRK2 prevents the association of RAB regulatory proteins, including RAB GDP dissociation inhibitors GDI1 and GDI2.

It is found in the cell membrane. The protein localises to the early endosome membrane. Its subcellular location is the melanosome. The protein resides in the cytoplasmic vesicle. It localises to the cell projection. It is found in the ruffle. The protein localises to the membrane. Its subcellular location is the cytoplasm. The protein resides in the cytosol. It localises to the phagosome membrane. It is found in the endosome membrane. The catalysed reaction is GTP + H2O = GDP + phosphate + H(+). With respect to regulation, regulated by guanine nucleotide exchange factors (GEFs) including RINL, which promote the exchange of bound GDP for free GTP. Regulated by GTPase activating proteins (GAPs) which increase the GTP hydrolysis activity. Inhibited by GDP dissociation inhibitors (GDIs). The small GTPases Rab are key regulators of intracellular membrane trafficking, from the formation of transport vesicles to their fusion with membranes. Rabs cycle between an inactive GDP-bound form and an active GTP-bound form that is able to recruit to membranes different sets of downstream effectors directly responsible for vesicle formation, movement, tethering and fusion. RAB5A is required for the fusion of plasma membranes and early endosomes. Contributes to the regulation of filopodia extension. Required for the exosomal release of SDCBP, CD63, PDCD6IP and syndecan. Regulates maturation of apoptotic cell-containing phagosomes, probably downstream of DYN2 and PIK3C3. The sequence is that of Ras-related protein Rab-5A (RAB5A) from Sus scrofa (Pig).